The primary structure comprises 605 residues: MILHHLLILLIINYCVATSPTNGYAPGPVSCPSSQLIRSGSQGINPNEQSYINARYPIAKQALSKFLHNANLQNFDVDSFLAHSNPTIGLAFSGGGYRAMLTGAGEISSLDSRTKTNTPVLAGILQASSYIAGLSGGSWLVGSLASNNLNSVDDMLSQGLWELTHSFLSYYGIEHPIKQVEEWVNVGNQVASKRNANFNVSLTDIYGRLLSYPLLTNTEDEGDAYLWSDVTSASNFQSHQMPFPILISDGRAPDTTIINLNSTVIELTPYEFGSWDPSLNEFVDTRYLGTKLDNGRPTGKCYNGFDNAGFFMGTSSALFNEAVLSITEANIPSFLKDIIDDILVDPILKSNIDVSAYNPNPFFKSSGSNTAISQSKNLYLVDGGEDGQNIPISPLLHRNVSAIFAFDNSNDVLNWPDGTSLVKTYERQFSSQGNGIAFPYVPDQYTFRNLNLTSKPTFFGCDAKNLTSLTKDIYDVPLVIYLANRPFTYWSNTSTFKLTYDDNERQGMISNGFEIATRSSGSLDDEWAACVGCAIIRREQERQGIEQTEQCKRCFENYCWDGTIYKGEPLGENFSDDGLTNSATEYNSNNVAGFNDGGTSILKKA.

The first 17 residues, 1 to 17 (MILHHLLILLIINYCVA), serve as a signal peptide directing secretion. The 536-residue stretch at 30–565 (SCPSSQLIRS…ENYCWDGTIY (536 aa)) folds into the PLA2c domain. N-linked (GlcNAc...) asparagine glycosylation is found at Asn-199, Asn-261, Asn-399, Asn-451, Asn-465, Asn-492, and Asn-573.

It belongs to the lysophospholipase family.

The protein resides in the secreted. The enzyme catalyses a 1-acyl-sn-glycero-3-phosphocholine + H2O = sn-glycerol 3-phosphocholine + a fatty acid + H(+). Functionally, catalyzes the release of fatty acids from lysophospholipids. Phospholipase B may well contribute to pathogenicity by abetting the fungus in damaging and traversing host cell membranes, processes which likely increase the rapidity of disseminated infection. The sequence is that of Lysophospholipase 1 from Candida albicans (strain SC5314 / ATCC MYA-2876) (Yeast).